The primary structure comprises 275 residues: Notch homolog 2 N-terminal-like protein B (275 aa).

A signal peptide spans 1–25 (MPALRPALLWALLALWLCCATPAHA). EGF-like domains are found at residues 26–63 (LQCR…EYCQ), 64–102 (HRDP…EDCQ), 105–143 (TSHP…KECQ), and 144–180 (WTDA…QKCE). 17 disulfide bridges follow: cysteine 28/cysteine 41, cysteine 35/cysteine 51, cysteine 53/cysteine 62, cysteine 68/cysteine 79, cysteine 73/cysteine 90, cysteine 92/cysteine 101, cysteine 109/cysteine 121, cysteine 115/cysteine 131, cysteine 133/cysteine 142, cysteine 148/cysteine 159, cysteine 153/cysteine 168, cysteine 170/cysteine 179, cysteine 186/cysteine 198, cysteine 192/cysteine 207, cysteine 209/cysteine 218, cysteine 225/cysteine 236, and cysteine 230/cysteine 246. Asparagine 46 carries an N-linked (GlcNAc...) asparagine glycan. N-linked (GlcNAc...) asparagine glycosylation is present at asparagine 155. Residues 182–219 (DVNECDIPGHCQHGGICLNLPGSYQCQCLQGFTGQYCD) enclose the EGF-like 5; calcium-binding domain. The EGF-like 6 domain maps to 221 to 258 (LYVPCAPSPCVNGGTCRQTGDFTFECNCLPETVRRGTE).

It belongs to the NOTCH family. In terms of assembly, interacts with NOTCH2. Interacts with DLL1; the interaction is direct. As to expression, expressed in radial glia neural stem cells during cortical development.

Its subcellular location is the secreted. Human-specific protein that promotes neural progenitor proliferation and evolutionary expansion of the brain neocortex by regulating the Notch signaling pathway. Able to promote neural progenitor self-renewal, possibly by down-regulating neuronal differentiation genes, thereby delaying the differentiation of neuronal progenitors and leading to an overall final increase in neuronal production. Acts by enhancing the Notch signaling pathway via two different mechanisms that probably work in parallel to reach the same effect. Enhances Notch signaling pathway in a non-cell-autonomous manner via direct interaction with NOTCH2. Also promotes Notch signaling pathway in a cell-autonomous manner through inhibition of cis DLL1-NOTCH2 interactions, which promotes neuronal differentiation. This Homo sapiens (Human) protein is Notch homolog 2 N-terminal-like protein B.